The following is a 368-amino-acid chain: MGLAGAKNKRKLGNDPNNTKWSRNTDTFGQKILRAQGWQPGEYLGAKDAAHAEWHTEANTTHIRVTLKDDTLGLGAKRNNGDECTGLDAFQHLLGRLNGKSDEALEAEQKVRNDVKLSLYIQKKFGMMRFVKGGWLVGDQVKQTPDEEAEEIPDSTETSEAPEPAAVESKKRKADRRSDKEDDKLGKKEKKSKKRKAGSEGDVGGEGGQKEKDKKSKRRKTESDECEEPAVTPKTAESLDEASGASEAGNTKNEKKDKKRDKKEKKERRDKKEKKEKRRIEKAAAESGAETGDSISEEKKRKKKEATSEPSSAPTPTDSNSSTPTGSGYSTPIPTGSSRYLARSRFIAQKKMAFADSAALNQIFMIKS.

The segment at 1–24 is disordered; the sequence is MGLAGAKNKRKLGNDPNNTKWSRN. The segment covering 15–24 has biased composition (polar residues); it reads DPNNTKWSRN. The G-patch domain maps to 25–79; the sequence is TDTFGQKILRAQGWQPGEYLGAKDAAHAEWHTEANTTHIRVTLKDDTLGLGAKRN. The interval 144-337 is disordered; sequence TPDEEAEEIP…GYSTPIPTGS (194 aa). Basic and acidic residues predominate over residues 176-186; that stretch reads RRSDKEDDKLG. 2 stretches are compositionally biased toward basic residues: residues 187 to 196 and 257 to 277; these read KKEKKSKKRK and DKKRDKKEKKERRDKKEKKEK. A compositionally biased stretch (low complexity) spans 310–337; sequence PSSAPTPTDSNSSTPTGSGYSTPIPTGS.

The protein belongs to the PINX1 family.

The protein localises to the nucleus. It localises to the nucleolus. Its function is as follows. Involved in rRNA-processing at A0, A1 and A2 sites and negatively regulates telomerase. This chain is Protein PXR1 (PXR1), found in Chaetomium globosum (strain ATCC 6205 / CBS 148.51 / DSM 1962 / NBRC 6347 / NRRL 1970) (Soil fungus).